The following is a 1062-amino-acid chain: Integrin alpha-8 (1062 aa).

The first 35 residues, 1-35 (MSAGTHCGPPGNRAPPFARLCCVSAALGMLWSPAC), serve as a signal peptide directing secretion. Residues 36 to 1010 (LAFNLDVDKL…ATPNVSFSIP (975 aa)) are Extracellular-facing. FG-GAP repeat units follow at residues 41 to 104 (DVDK…RSAQ), 121 to 182 (NGTK…AYAE), 187 to 239 (RNSN…IANY), 252 to 305 (KQTD…STDM), 306 to 371 (TFIQ…LLFQ), 372 to 430 (DPQV…GLHS), and 434 to 497 (QVLQ…LHPM). Asn80 carries N-linked (GlcNAc...) asparagine glycosylation. Cys95 and Cys105 are oxidised to a cystine. Asn121 carries an N-linked (GlcNAc...) asparagine glycan. An intrachain disulfide couples Cys149 to Cys170. Asn176 carries an N-linked (GlcNAc...) asparagine glycan. A disulfide bond links Cys186 and Cys199. N-linked (GlcNAc...) asparagine glycosylation occurs at Asn238. Positions 274, 276, 278, and 282 each coordinate Ca(2+). Residues Asn301 and Asn310 are each glycosylated (N-linked (GlcNAc...) asparagine). Asp328, Asn330, Asp332, Asp336, Asp394, Asn396, Asp398, Tyr400, and Asp402 together coordinate Ca(2+). Positions 454–456 (RGD) match the Cell attachment site motif. Ca(2+)-binding residues include Asp458, Asp460, Asn462, Tyr464, and Asp466. Asn503 carries an N-linked (GlcNAc...) asparagine glycan. 2 disulfides stabilise this stretch: Cys506–Cys517 and Cys523–Cys579. N-linked (GlcNAc...) asparagine glycosylation is found at Asn600 and Asn604. 2 disulfides stabilise this stretch: Cys640-Cys646 and Cys712-Cys725. Asn718, Asn736, Asn752, Asn779, Asn895, and Asn922 each carry an N-linked (GlcNAc...) asparagine glycan. Cystine bridges form between Cys866–Cys923 and Cys928–Cys933. Asn1004 carries an N-linked (GlcNAc...) asparagine glycan. A helical transmembrane segment spans residues 1011 to 1031 (LWVIILAILLGLLVLAILTLA). Residues 1032–1062 (LWKCGFFDRARPPQDEMTDREQLTSDKTPEA) lie on the Cytoplasmic side of the membrane.

Belongs to the integrin alpha chain family. Heterodimer of an alpha and a beta subunit. The alpha subunit is composed of a heavy and a light chain linked by a disulfide bond. Alpha-8 associates with beta-1. In brain, expressed in deep cortex, hippocampal CA1, basolateral amygdala and striatum. In kidney, expressed in glomerular mesengium (at protein level).

The protein resides in the membrane. The protein localises to the cell membrane. Integrin alpha-8/beta-1 functions in the genesis of kidney and probably of other organs by regulating the recruitment of mesenchymal cells into epithelial structures. It recognizes the sequence R-G-D in a wide array of ligands including TNC, FN1, SPP1 TGFB1, TGFB3 and VTN. NPNT is probably its functional ligand in kidney genesis. Neuronal receptor for TNC it mediates cell-cell interactions and regulates neurite outgrowth of sensory and motor neurons. The sequence is that of Integrin alpha-8 (Itga8) from Mus musculus (Mouse).